The chain runs to 317 residues: Uridylate kinase (317 aa).

9-12 (KISG) lines the ATP pocket. Position 49 (glycine 49) interacts with UMP. 2 residues coordinate ATP: glycine 50 and arginine 54. UMP-binding positions include aspartate 69 and 130-137 (TGRPYFTT). Residues asparagine 158, tyrosine 164, and aspartate 167 each contribute to the ATP site.

It belongs to the UMP kinase family. As to quaternary structure, homohexamer.

It localises to the cytoplasm. It catalyses the reaction UMP + ATP = UDP + ADP. Its pathway is pyrimidine metabolism; CTP biosynthesis via de novo pathway; UDP from UMP (UMPK route): step 1/1. Inhibited by UTP. Functionally, catalyzes the reversible phosphorylation of UMP to UDP. This Malacoplasma penetrans (strain HF-2) (Mycoplasma penetrans) protein is Uridylate kinase.